An 83-amino-acid chain; its full sequence is Small ribosomal subunit protein uS17 (83 aa).

The protein belongs to the universal ribosomal protein uS17 family. Part of the 30S ribosomal subunit.

One of the primary rRNA binding proteins, it binds specifically to the 5'-end of 16S ribosomal RNA. This Campylobacter curvus (strain 525.92) protein is Small ribosomal subunit protein uS17.